Consider the following 447-residue polypeptide: Probable glycine dehydrogenase (decarboxylating) subunit 1 (447 aa).

Belongs to the GcvP family. N-terminal subunit subfamily. In terms of assembly, the glycine cleavage system is composed of four proteins: P, T, L and H. In this organism, the P 'protein' is a heterodimer of two subunits.

It carries out the reaction N(6)-[(R)-lipoyl]-L-lysyl-[glycine-cleavage complex H protein] + glycine + H(+) = N(6)-[(R)-S(8)-aminomethyldihydrolipoyl]-L-lysyl-[glycine-cleavage complex H protein] + CO2. Its function is as follows. The glycine cleavage system catalyzes the degradation of glycine. The P protein binds the alpha-amino group of glycine through its pyridoxal phosphate cofactor; CO(2) is released and the remaining methylamine moiety is then transferred to the lipoamide cofactor of the H protein. This Bacillus mycoides (strain KBAB4) (Bacillus weihenstephanensis) protein is Probable glycine dehydrogenase (decarboxylating) subunit 1.